Consider the following 167-residue polypeptide: Large ribosomal subunit protein bL9 (167 aa).

Belongs to the bacterial ribosomal protein bL9 family.

Binds to the 23S rRNA. In Chlamydia trachomatis serovar L2 (strain ATCC VR-902B / DSM 19102 / 434/Bu), this protein is Large ribosomal subunit protein bL9.